The primary structure comprises 269 residues: Protein tio (269 aa).

Positions 1–12 are enriched in basic and acidic residues; the sequence is MANEPQEHEEGK. A disordered region spans residues 1–127; it reads MANEPQEHEE…NETKCPDEQN (127 aa). Topologically, residues 1–246 are cytoplasmic; that stretch reads MANEPQEHEE…VEKKLTCVIC (246 aa). A compositionally biased stretch (pro residues) spans 27-41; the sequence is PNIPQDPTPGTPPGP. Over residues 61-74 the composition is skewed to low complexity; the sequence is SEGPPDGSGNSSPP. 2 stretches are compositionally biased toward polar residues: residues 91–101 and 114–127; these read SESGGNNSAPN and AGNGNETKCPDEQN. Phosphotyrosine; by host LCK is present on Y136. The tract at residues 158 to 167 is CSKH/LBD2; the sequence is EEERSPFNKY. Residues 186 to 195 are SH3B/LBD1; it reads IPPPQLPPRP. The helical transmembrane segment at 247–267 threads the bilayer; sequence LLIGILVLLILLFMLGFLFLL. The Extracellular portion of the chain corresponds to 268–269; sequence MK.

As to quaternary structure, homodimer. Binds SH3 domain of host LYN, HCK, LCK, SRC, FYN or YES. When tyrosine-phosphorylated, binds to the SH2 domain of host LCK, SRC, or FYN. In terms of processing, phosphorylated by host LCK, SRC and less efficiently by FYN.

The protein resides in the host cell membrane. Transforms host T-cells, inducing T-cell lymphomia in the host. Activates at least SRC and LCK tyrosines kinases, thereby activating signaling pathway transforming host T-cells. Human T-cells transformed ex vivo display a IL2 indenpendent growth phenotype. The chain is Protein tio from Ateles (AtHV-3).